Here is a 333-residue protein sequence, read N- to C-terminus: Phenylalanine--tRNA ligase alpha subunit (333 aa).

Glutamate 254 serves as a coordination point for Mg(2+).

Belongs to the class-II aminoacyl-tRNA synthetase family. Phe-tRNA synthetase alpha subunit type 1 subfamily. As to quaternary structure, tetramer of two alpha and two beta subunits. Requires Mg(2+) as cofactor.

Its subcellular location is the cytoplasm. It carries out the reaction tRNA(Phe) + L-phenylalanine + ATP = L-phenylalanyl-tRNA(Phe) + AMP + diphosphate + H(+). This Xylella fastidiosa (strain M12) protein is Phenylalanine--tRNA ligase alpha subunit.